Reading from the N-terminus, the 154-residue chain is Myoglobin (154 aa).

The Globin domain occupies 2–148 (GLSDQEWQHV…FRNDMASKYK (147 aa)). Position 65 (His65) interacts with nitrite. Position 65 (His65) interacts with O2. A heme b-binding site is contributed by His94.

The protein belongs to the globin family. In terms of assembly, monomeric.

Its subcellular location is the cytoplasm. The protein resides in the sarcoplasm. It carries out the reaction Fe(III)-heme b-[protein] + nitric oxide + H2O = Fe(II)-heme b-[protein] + nitrite + 2 H(+). The enzyme catalyses H2O2 + AH2 = A + 2 H2O. Its function is as follows. Monomeric heme protein which primary function is to store oxygen and facilitate its diffusion within muscle tissues. Reversibly binds oxygen through a pentacoordinated heme iron and enables its timely and efficient release as needed during periods of heightened demand. Depending on the oxidative conditions of tissues and cells, and in addition to its ability to bind oxygen, it also has a nitrite reductase activity whereby it regulates the production of bioactive nitric oxide. Under stress conditions, like hypoxia and anoxia, it also protects cells against reactive oxygen species thanks to its pseudoperoxidase activity. The sequence is that of Myoglobin (MB) from Uria lomvia (Thick-billed murre).